Consider the following 406-residue polypeptide: GTPase Obg (406 aa).

Residues 1-159 (MKFVDEVSIF…RDLKLELKVL (159 aa)) form the Obg domain. The tract at residues 126 to 149 (GNTRFKSSTNRAPRQTTPGKPGES) is disordered. The segment covering 129–143 (RFKSSTNRAPRQTTP) has biased composition (polar residues). One can recognise an OBG-type G domain in the interval 160–333 (ADVGLLGLPN…ICRDIMHYLE (174 aa)). GTP is bound by residues 166 to 173 (GLPNAGKS), 191 to 195 (FTTLV), 213 to 216 (DIPG), 283 to 286 (NKMD), and 314 to 316 (SAI). Mg(2+) is bound by residues serine 173 and threonine 193. A disordered region spans residues 376–406 (SGVRSVDDIDEDDDFFDDEDDDGPEIIYVRD). Residues 383–399 (DIDEDDDFFDDEDDDGP) are compositionally biased toward acidic residues.

This sequence belongs to the TRAFAC class OBG-HflX-like GTPase superfamily. OBG GTPase family. As to quaternary structure, monomer. The cofactor is Mg(2+).

Its subcellular location is the cytoplasm. In terms of biological role, an essential GTPase which binds GTP, GDP and possibly (p)ppGpp with moderate affinity, with high nucleotide exchange rates and a fairly low GTP hydrolysis rate. Plays a role in control of the cell cycle, stress response, ribosome biogenesis and in those bacteria that undergo differentiation, in morphogenesis control. This Ectopseudomonas mendocina (strain ymp) (Pseudomonas mendocina) protein is GTPase Obg.